A 589-amino-acid chain; its full sequence is Putative sphingomyelin phosphodiesterase asm-3 (589 aa).

A signal peptide spans 1–17 (MLLGLLVLSLAFQGTLA). The Saposin B-type domain occupies 18–101 (VTECEECKSI…LMKNDCGDFV (84 aa)). Disulfide bonds link Cys-21/Cys-97, Cys-24/Cys-89, and Cys-52/Cys-63. An N-linked (GlcNAc...) asparagine glycan is attached at Asn-109. Zn(2+)-binding residues include Asp-139 and His-141. 2 disulfides stabilise this stretch: Cys-154-Cys-159 and Cys-160-Cys-188. Zn(2+) is bound at residue Asp-217. A glycan (N-linked (GlcNAc...) asparagine) is linked at Asn-237. Position 257 (Asn-257) interacts with Zn(2+). N-linked (GlcNAc...) asparagine glycosylation is present at Asn-334. The Zn(2+) site is built by His-364, His-398, and His-400. Asn-463 carries N-linked (GlcNAc...) asparagine glycosylation. Cystine bridges form between Cys-530/Cys-535 and Cys-541/Cys-553. Positions 562-589 (KPEPKKNKYSARFATSNERRRGKEECKI) are disordered. Basic and acidic residues predominate over residues 578 to 589 (NERRRGKEECKI).

The protein belongs to the acid sphingomyelinase family. Zn(2+) is required as a cofactor.

It localises to the secreted. The catalysed reaction is an N-(acyl)-sphingosylphosphocholine + H2O = an N-acyl-sphingoid base + phosphocholine + H(+). It catalyses the reaction a sphingomyelin + H2O = phosphocholine + an N-acylsphing-4-enine + H(+). It carries out the reaction an N-acyl-15-methylhexadecasphing-4-enine-1-phosphocholine + H2O = an N-acyl-15-methylhexadecasphing-4-enine + phosphocholine + H(+). Its pathway is lipid metabolism; sphingolipid metabolism. In terms of biological role, converts sphingomyelin to ceramide (N-acyl-sphingoid base) and phosphocholine. C.elegans contain specific sphingoid bases, which are unique or different in structure compared to the sphingoid bases found in other animals. Two examples of these distinctive compounds are: 15-methylhexadecasphinganine and 15-methylhexadecasphing-4-enine. The chain is Putative sphingomyelin phosphodiesterase asm-3 (asm-3) from Caenorhabditis elegans.